A 61-amino-acid polypeptide reads, in one-letter code: Metallothionein-1B (61 aa).

The interval 1–29 is beta; that stretch reads MDPNCSCPTSGSCSCAGSCTCKACRCPSC. Positions 5, 7, 13, 15, 19, 21, 24, 26, 29, 33, 34, 36, 37, 41, 44, 48, 50, 57, 59, and 60 each coordinate a divalent metal cation. Residues 30–61 form an alpha region; it reads KKSCCSCCPVGCAKCAQGCVCKGASDKCSCCA.

Belongs to the metallothionein superfamily. Type 1 family.

Its function is as follows. Metallothioneins have a high content of cysteine residues that bind various heavy metals; these proteins are transcriptionally regulated by both heavy metals and glucocorticoids. The chain is Metallothionein-1B (MT1B) from Ovis aries (Sheep).